The primary structure comprises 178 residues: SsrA-binding protein (178 aa).

Residues 1–28 (MAKKSTPVDSGRSKGKKASAPRGGGPAV) form a disordered region.

Belongs to the SmpB family.

It localises to the cytoplasm. Functionally, required for rescue of stalled ribosomes mediated by trans-translation. Binds to transfer-messenger RNA (tmRNA), required for stable association of tmRNA with ribosomes. tmRNA and SmpB together mimic tRNA shape, replacing the anticodon stem-loop with SmpB. tmRNA is encoded by the ssrA gene; the 2 termini fold to resemble tRNA(Ala) and it encodes a 'tag peptide', a short internal open reading frame. During trans-translation Ala-aminoacylated tmRNA acts like a tRNA, entering the A-site of stalled ribosomes, displacing the stalled mRNA. The ribosome then switches to translate the ORF on the tmRNA; the nascent peptide is terminated with the 'tag peptide' encoded by the tmRNA and targeted for degradation. The ribosome is freed to recommence translation, which seems to be the essential function of trans-translation. This chain is SsrA-binding protein, found in Corynebacterium urealyticum (strain ATCC 43042 / DSM 7109).